Reading from the N-terminus, the 661-residue chain is MDMKHSRLFSPLQIGSLTLSNRVGMAPMSMDYEAADGTVPKRLADVFVRRAEGGTGYVMIDAVTIDSKYPYMGNTTALDRDELVPQFKEFADRVKEAGSTLVPQIIHPGPESVCGYRHIAPLGPSANTNANCHVSRSISIDEIHDIIKQFGQAARRAEEAGCGAISLHCAHAYMLPGSFLSPLRNKRMDEYGGSLDNRARFVIEMIEEARRNVSPDFPIFLRISGDERMVGGNSLEDMLYLAPKFEAAGVSMLEVSGGTQYEGLEHIIPCQNKSRGVNVYEASEIKKVVGIPVYAVGKINDIRYAAEIVERGLVDGVAMGRPLLADPDLCKKAVEGQFDEITPCASCGGSCISRSEAAPECHCHINPRLGREYEFPDVPAEKSKKVLVIGAGPGGMMAAVTAAERGHDVTVWEADDKIGGQLNLAVVAPGKQEMTQWMVHLNYRAKKAGVKFEFNKEATAEDVKALAPEAVIVATGAKPLVPPIKGTQDYPVLTAHDFLRGKFVIPKGRVCVLGGGAVACETAETALENARPNSYTRGYDASIGDIDVTLVEMLPQLLTGVCAPNREPLIRKLKSKGVHINVNTKIMEVTDHEVKVQRQDGTQEWLEGFDYVLFGLGSRNYDPLSETLKEFVPEVHVIGDAVRARQASYAMWEGFEKAYSL.

Residue Gln-104 coordinates FMN. 168 to 171 is a substrate binding site; that stretch reads HCAH. Tyr-173 functions as the Proton donor in the catalytic mechanism. Residues Arg-222, Lys-298, and 320–321 each bind FMN; that span reads GR. 4 residues coordinate [4Fe-4S] cluster: Cys-344, Cys-347, Cys-351, and Cys-363. 5 residues coordinate FAD: Gly-394, Glu-413, Gln-421, Lys-431, and Ala-458.

The protein in the N-terminal section; belongs to the NADH:flavin oxidoreductase/NADH oxidase family. Homotrimer. The cofactor is FMN. FAD serves as cofactor. Requires [4Fe-4S] cluster as cofactor.

The catalysed reaction is 7beta-hydroxy-3-oxochol-24-oyl-CoA + NAD(+) = 7beta-hydroxy-3-oxochol-4-en-24-oyl-CoA + NADH + H(+). It functions in the pathway lipid metabolism; bile acid degradation. Its activity is regulated as follows. Activity is inhibited by sulfhydryl-reactive compounds, acriflavine, o-phenanthroline and EDTA. NADH-dependent flavin oxidoreductase. Stereo-specific NAD(H)-dependent 3-oxo-delta4-cholenoic acid oxidoreductase involved in bile acid 7beta-dehydroxylation. This is 7-beta-hydroxy-3-oxochol-24-oyl-CoA 4-desaturase from Clostridium scindens (strain JCM 10418 / VPI 12708).